We begin with the raw amino-acid sequence, 150 residues long: UPF0756 membrane protein APL_0366 (150 aa).

4 consecutive transmembrane segments (helical) span residues 12–34, 52–72, 82–102, and 123–143; these read LVVL…ATVL, HGLS…IVSG, FLNW…WLGG, and IIGV…AGIL.

The protein belongs to the UPF0756 family.

It is found in the cell membrane. The chain is UPF0756 membrane protein APL_0366 from Actinobacillus pleuropneumoniae serotype 5b (strain L20).